The primary structure comprises 493 residues: Cyclin-dependent kinase-like 2 (493 aa).

In terms of domain architecture, Protein kinase spans 4 to 287 (YENLGLVGEG…CAELLHHDFF (284 aa)). ATP-binding positions include 10-18 (VGEGSYGMV) and Lys-33. A [NKR]KIAxRE motif is present at residues 45–51 (KKIAMRE). The active-site Proton acceptor is the Asp-126. Disordered regions lie at residues 311–338 (VSLS…KTLV) and 363–384 (GEKA…SRTS). Over residues 320–336 (RKKEKEKDDSLGEERKT) the composition is skewed to basic and acidic residues.

It belongs to the protein kinase superfamily. CMGC Ser/Thr protein kinase family. CDC2/CDKX subfamily.

The protein resides in the cytoplasm. The protein localises to the nucleus. The enzyme catalyses L-seryl-[protein] + ATP = O-phospho-L-seryl-[protein] + ADP + H(+). It catalyses the reaction L-threonyl-[protein] + ATP = O-phospho-L-threonyl-[protein] + ADP + H(+). The sequence is that of Cyclin-dependent kinase-like 2 from Pongo abelii (Sumatran orangutan).